Consider the following 302-residue polypeptide: Elongation factor Ts (302 aa).

The segment at 82–85 is involved in Mg(2+) ion dislocation from EF-Tu; the sequence is TDFV.

Belongs to the EF-Ts family.

The protein localises to the cytoplasm. Associates with the EF-Tu.GDP complex and induces the exchange of GDP to GTP. It remains bound to the aminoacyl-tRNA.EF-Tu.GTP complex up to the GTP hydrolysis stage on the ribosome. The protein is Elongation factor Ts of Nitrosospira multiformis (strain ATCC 25196 / NCIMB 11849 / C 71).